The chain runs to 20 residues: RGSNLTHPLRNIGDLFYVGN.

N4 and N20 each carry an N-linked (GlcNAc...) asparagine glycan.

Belongs to the peptidase A1 family. Chorionic epithelium (trophectoderm) and placental cotyledons.

It localises to the secreted. The protein resides in the extracellular space. This chain is Pregnancy-associated glycoprotein 67A, found in Bison bonasus (European bison).